The primary structure comprises 97 residues: Spermatogenesis-associated protein 45 (97 aa).

It belongs to the SPATA45 family.

The polypeptide is Spermatogenesis-associated protein 45 (Spata45) (Mus musculus (Mouse)).